The chain runs to 80 residues: Small ribosomal subunit protein uS17 (80 aa).

This sequence belongs to the universal ribosomal protein uS17 family. Part of the 30S ribosomal subunit.

Its function is as follows. One of the primary rRNA binding proteins, it binds specifically to the 5'-end of 16S ribosomal RNA. In Brucella anthropi (strain ATCC 49188 / DSM 6882 / CCUG 24695 / JCM 21032 / LMG 3331 / NBRC 15819 / NCTC 12168 / Alc 37) (Ochrobactrum anthropi), this protein is Small ribosomal subunit protein uS17.